The sequence spans 481 residues: O-acetyltransferase andG (481 aa).

This sequence belongs to the fumigaclavine B O-acetyltransferase family. As to quaternary structure, monomer.

The protein operates within secondary metabolite biosynthesis; terpenoid biosynthesis. Its function is as follows. O-acetyltransferase; part of the gene cluster that mediates the biosynthesis of anditomin, a fungal meroterpenoid. The first step of the pathway is the synthesis of 3,5-dimethylorsellinic acid (DMOA) by the polyketide synthase andM. DMOA is then converted to the phthalide compound 5,7-dihydroxy-4,6-dimethylphthalide (DHDMP) by the cytochrome P450 monooxygenase andK, which is further prenylated by the prenyltransferase andD to yield farnesyl-DHDMP. Further epoxidation by the FAD-dependent monooxygenase andE leads to epoxyfarnesyl-DHDMP. The next step involves the terpene cyclase andB that converts epoxyfarnesyl-DHDMP into preandiloid A through opening of the epoxide ring followed by the cyclization of the farnesyl moiety. Preandiloid A is in turn oxidized at the C-3 hydroxyl group to yield preandiloid B by the dehydrogenase andC. The dioxygenase andA is solely responsible for the dehydrogenation of preandiloid B leading to the enone preandiloid C, as well as for the intriguing structural rearrangement to generate the bicyclo[2.2.2]octane core, transforming preandiloid C into andiconin. FAD-binding monooxygenase andJ then produces andilesin D which is reduced by dehydrogenase andI to yield andilesin A. Action of acetyltransferase andG followed by a spontaneous acetate elimination leads then to andilesin B, which is in turn substrate of the short chain dehydrogenase andH to yield andilesin C. Finally, the dioxygenase andF catalyzes the transformation of andilesin C to anditomin. This Emericella variicolor (Aspergillus stellatus) protein is O-acetyltransferase andG.